Consider the following 490-residue polypeptide: Limb region 1 protein homolog (490 aa).

The Extracellular portion of the chain corresponds to 1–19 (MEGQDEVSAREQHFHSQVR). The helical transmembrane segment at 20–40 (ESTICFLLFAILYVVSYFIIT) threads the bilayer. At 41–62 (RYKRKSDEQEDEDAIVNRISLF) the chain is on the cytoplasmic side. A helical transmembrane segment spans residues 63 to 83 (LSTFTLAVSAGAVLLLPFSII). Over 84-110 (SNEILLSFPQNYYIQWLNGSLIHGLWN) the chain is Extracellular. A helical transmembrane segment spans residues 111–131 (LASLFSNLCLFVLMPFAFFFL). At 132–151 (ESEGFAGLKKGIRARILETL) the chain is on the cytoplasmic side. The chain crosses the membrane as a helical span at residues 152–172 (VMLLLLALLILGIVWVASALI). Over 173–187 (DNDAASMESLYDLWE) the chain is Extracellular. Residues 188-208 (FYLPYLYSCISLMGCLLLLLC) form a helical membrane-spanning segment. Residues 209 to 291 (TPVGLSRMFT…RKKASAWERN (83 aa)) lie on the Cytoplasmic side of the membrane. Residues 250–287 (RLNGLSSSVEYNIMELEQELENVKTLKTKLERRKKASA) adopt a coiled-coil conformation. The chain crosses the membrane as a helical span at residues 292 to 312 (LVYPAVMVLLLIETSISVLLV). The Extracellular segment spans residues 313-339 (ACNILCLLVDETAMPKGTRGPGIGNAS). The helical transmembrane segment at 340–360 (LSTFGFVGAALEIILIFYLMV) threads the bilayer. Topologically, residues 361-383 (SSVVGFYSLRFFGNFTPKKDDTT) are cytoplasmic. Residues 384–404 (MTKIIGNCVSILVLSSALPVM) traverse the membrane as a helical segment. Topologically, residues 405–426 (SRTLGITRFDLLGDFGRFNWLG) are extracellular. Residues 427-447 (NFYIVLSYNLLFAIVTTLCLV) traverse the membrane as a helical segment. Over 448 to 490 (RKFTSAVREELFKALGLHKLHLPNTSRDSETAKPSVNGHQKAL) the chain is Cytoplasmic.

This sequence belongs to the LIMR family. In terms of tissue distribution, widely expressed with strongest expression in heart and pancreas.

Its subcellular location is the membrane. Putative membrane receptor. The sequence is that of Limb region 1 protein homolog (LMBR1) from Homo sapiens (Human).